The chain runs to 255 residues: NAD kinase (255 aa).

The active-site Proton acceptor is Asp44. Residues 44 to 45 (DG), His49, 114 to 115 (NE), Asp144, Ala152, 155 to 160 (SAYNLS), and Gln216 each bind NAD(+).

Belongs to the NAD kinase family. The cofactor is a divalent metal cation.

It is found in the cytoplasm. The catalysed reaction is NAD(+) + ATP = ADP + NADP(+) + H(+). Its function is as follows. Involved in the regulation of the intracellular balance of NAD and NADP, and is a key enzyme in the biosynthesis of NADP. Catalyzes specifically the phosphorylation on 2'-hydroxyl of the adenosine moiety of NAD to yield NADP. This is NAD kinase from Rickettsia bellii (strain OSU 85-389).